The sequence spans 489 residues: Probable transporter MCH1 (489 aa).

Helical transmembrane passes span 30–50 (IAYIFALFAAITSGFVSLISL), 68–88 (MIVTVINMGMYLTPPILGIIA), and 92–112 (GPITLSLSSVLGFIPSYAYLA). Asn-123 is a glycosylation site (N-linked (GlcNAc...) asparagine). The next 8 helical transmembrane spans lie at 132–152 (TLVCFFIIGVATSGLYFSALI), 163–183 (LLSISIPTTCYGLSSLIGSQF), 202–222 (VFKAFAWIYTVIGVMIWIATS), 279–299 (VLYIFGATIFCALGPLEMFIA), 307–327 (VLAGGHEPAMSSALLSIYALT), 351–371 (WILLLFLVVGLVTQGKIYMLS), 388–408 (FYIGIMQGIAYGGLFTIYPTI), and 421–441 (AYGTLMIAPALGSALSCLIYA). N-linked (GlcNAc...) asparagine glycosylation is present at Asn-450. A helical membrane pass occupies residues 462–482 (ETTALEFCAAILLTVVVTVLW).

The protein belongs to the major facilitator superfamily.

The protein localises to the vacuole membrane. Functionally, probable transporter. The protein is Probable transporter MCH1 (MCH1) of Candida glabrata (strain ATCC 2001 / BCRC 20586 / JCM 3761 / NBRC 0622 / NRRL Y-65 / CBS 138) (Yeast).